The sequence spans 194 residues: Probable nicotinate-nucleotide adenylyltransferase (194 aa).

The protein belongs to the NadD family.

It catalyses the reaction nicotinate beta-D-ribonucleotide + ATP + H(+) = deamido-NAD(+) + diphosphate. It functions in the pathway cofactor biosynthesis; NAD(+) biosynthesis; deamido-NAD(+) from nicotinate D-ribonucleotide: step 1/1. In terms of biological role, catalyzes the reversible adenylation of nicotinate mononucleotide (NaMN) to nicotinic acid adenine dinucleotide (NaAD). The chain is Probable nicotinate-nucleotide adenylyltransferase from Brucella abortus (strain 2308).